The primary structure comprises 246 residues: 2-C-methyl-D-erythritol 4-phosphate cytidylyltransferase (246 aa).

It belongs to the IspD/TarI cytidylyltransferase family. IspD subfamily.

It carries out the reaction 2-C-methyl-D-erythritol 4-phosphate + CTP + H(+) = 4-CDP-2-C-methyl-D-erythritol + diphosphate. Its pathway is isoprenoid biosynthesis; isopentenyl diphosphate biosynthesis via DXP pathway; isopentenyl diphosphate from 1-deoxy-D-xylulose 5-phosphate: step 2/6. Functionally, catalyzes the formation of 4-diphosphocytidyl-2-C-methyl-D-erythritol from CTP and 2-C-methyl-D-erythritol 4-phosphate (MEP). This is 2-C-methyl-D-erythritol 4-phosphate cytidylyltransferase from Clostridium tetani (strain Massachusetts / E88).